Consider the following 243-residue polypeptide: Putative glycerophosphodiester phosphodiesterase YhdW (243 aa).

In terms of domain architecture, GP-PDE spans Met1 to Gly238. The active-site Proton acceptor is the His6. Glu33 and Asp35 together coordinate Ca(2+). His48 (proton donor) is an active-site residue. Glu107 lines the Ca(2+) pocket.

Belongs to the glycerophosphoryl diester phosphodiesterase family. It depends on Ca(2+) as a cofactor.

It carries out the reaction a sn-glycero-3-phosphodiester + H2O = an alcohol + sn-glycerol 3-phosphate + H(+). Glycerophosphodiester phosphodiesterase hydrolyzes glycerophosphodiesters into glycerol-3-phosphate (G3P) and the corresponding alcohol. The polypeptide is Putative glycerophosphodiester phosphodiesterase YhdW (yhdW) (Bacillus subtilis (strain 168)).